Reading from the N-terminus, the 170-residue chain is Protein SprT (170 aa).

One can recognise a SprT-like domain in the interval 22–165; the sequence is LQLANQHLGT…RQCGEKLQFI (144 aa). Residue His-78 participates in Zn(2+) binding. Glu-79 is a catalytic residue. A Zn(2+)-binding site is contributed by His-82.

Belongs to the SprT family. Requires Zn(2+) as cofactor.

It is found in the cytoplasm. This Yersinia pseudotuberculosis serotype O:1b (strain IP 31758) protein is Protein SprT.